Here is a 387-residue protein sequence, read N- to C-terminus: Leucine aminopeptidase 1 (387 aa).

The first 18 residues, 1–18 (MKFTNLSLLALSASLASA), serve as a signal peptide directing secretion. Positions 19-86 (RFVEQHETDQ…LGTLRTSSVK (68 aa)) are excised as a propeptide. Asn179 is a glycosylation site (N-linked (GlcNAc...) asparagine). The Zn(2+) site is built by His187, Asp206, Glu245, and Asp272. An intrachain disulfide couples Cys321 to Cys325. Zn(2+) is bound at residue His354.

This sequence belongs to the peptidase M28 family. M28E subfamily. As to quaternary structure, monomer. It depends on Zn(2+) as a cofactor.

It is found in the secreted. Functionally, extracellular aminopeptidase that allows assimilation of proteinaceous substrates. The polypeptide is Leucine aminopeptidase 1 (lap1) (Sclerotinia sclerotiorum (strain ATCC 18683 / 1980 / Ss-1) (White mold)).